A 146-amino-acid chain; its full sequence is Arginine vasopressin-induced protein 1 (146 aa).

2 disordered regions span residues 1-31 and 80-146; these read MGTP…RKQA and RRKR…QIRH. Residues 80 to 92 are compositionally biased toward basic residues; that stretch reads RRKRPPRQNHCSR. Positions 106–123 are enriched in polar residues; sequence QASTTDTASSEQFGNSRR.

May be involved in MAP kinase activation, epithelial sodium channel (ENaC) down-regulation and cell cycling. In Rattus norvegicus (Rat), this protein is Arginine vasopressin-induced protein 1 (Avpi1).